Consider the following 163-residue polypeptide: NADH-quinone oxidoreductase subunit I (163 aa).

2 consecutive 4Fe-4S ferredoxin-type domains span residues 53–83 (LRRYPNGEERCIACKLCEAICPAQAITIEAG) and 94–123 (VRYDIDMVKCIYCGFCQEACPVDAIVEGPN). The [4Fe-4S] cluster site is built by Cys63, Cys66, Cys69, Cys73, Cys103, Cys106, Cys109, and Cys113.

Belongs to the complex I 23 kDa subunit family. As to quaternary structure, NDH-1 is composed of 14 different subunits. Subunits NuoA, H, J, K, L, M, N constitute the membrane sector of the complex. The cofactor is [4Fe-4S] cluster.

It localises to the cell inner membrane. The catalysed reaction is a quinone + NADH + 5 H(+)(in) = a quinol + NAD(+) + 4 H(+)(out). Its function is as follows. NDH-1 shuttles electrons from NADH, via FMN and iron-sulfur (Fe-S) centers, to quinones in the respiratory chain. The immediate electron acceptor for the enzyme in this species is believed to be ubiquinone. Couples the redox reaction to proton translocation (for every two electrons transferred, four hydrogen ions are translocated across the cytoplasmic membrane), and thus conserves the redox energy in a proton gradient. In Brucella melitensis biotype 1 (strain ATCC 23456 / CCUG 17765 / NCTC 10094 / 16M), this protein is NADH-quinone oxidoreductase subunit I.